A 395-amino-acid chain; its full sequence is uncharacterized protein (395 aa).

The span at 286-306 (SSNKSSESTMTSPLDSASSLH) shows a compositional bias: low complexity. The tract at residues 286–395 (SSNKSSESTM…RNDDSGLESV (110 aa)) is disordered. Over residues 350–362 (RPPPPSVHPPIFP) the composition is skewed to pro residues. Residues 364–385 (QTQLFHPPTYSTQRHVTSPNSS) are compositionally biased toward polar residues.

This is an uncharacterized protein from Caenorhabditis elegans.